The sequence spans 201 residues: Holliday junction branch migration complex subunit RuvA (201 aa).

Residues 1–64 form a domain I region; that stretch reads MIGRLHGKII…EDAHLLFGFA (64 aa). The interval 65-143 is domain II; sequence QKQDRTLFRE…GVAQSDFFEE (79 aa). The flexible linker stretch occupies residues 144–154; it reads HSVETIVATHS. Positions 154–201 are domain III; sequence SHDPADEARDALVALGYKLADAEKMIKKVNKAGATSEQLIREALKASL.

The protein belongs to the RuvA family. In terms of assembly, homotetramer. Forms an RuvA(8)-RuvB(12)-Holliday junction (HJ) complex. HJ DNA is sandwiched between 2 RuvA tetramers; dsDNA enters through RuvA and exits via RuvB. An RuvB hexamer assembles on each DNA strand where it exits the tetramer. Each RuvB hexamer is contacted by two RuvA subunits (via domain III) on 2 adjacent RuvB subunits; this complex drives branch migration. In the full resolvosome a probable DNA-RuvA(4)-RuvB(12)-RuvC(2) complex forms which resolves the HJ.

It localises to the cytoplasm. Functionally, the RuvA-RuvB-RuvC complex processes Holliday junction (HJ) DNA during genetic recombination and DNA repair, while the RuvA-RuvB complex plays an important role in the rescue of blocked DNA replication forks via replication fork reversal (RFR). RuvA specifically binds to HJ cruciform DNA, conferring on it an open structure. The RuvB hexamer acts as an ATP-dependent pump, pulling dsDNA into and through the RuvAB complex. HJ branch migration allows RuvC to scan DNA until it finds its consensus sequence, where it cleaves and resolves the cruciform DNA. This chain is Holliday junction branch migration complex subunit RuvA, found in Actinobacillus pleuropneumoniae serotype 7 (strain AP76).